The sequence spans 278 residues: Shikimate dehydrogenase (NADP(+)) (278 aa).

Residues 19 to 21 (SRS) and Thr66 contribute to the shikimate site. The active-site Proton acceptor is the Lys70. Asn91 and Asp106 together coordinate shikimate. NADP(+)-binding positions include 129–133 (GAGGA) and Phe221. Residue Tyr223 coordinates shikimate. An NADP(+)-binding site is contributed by Gly242.

This sequence belongs to the shikimate dehydrogenase family. In terms of assembly, homodimer.

It carries out the reaction shikimate + NADP(+) = 3-dehydroshikimate + NADPH + H(+). The protein operates within metabolic intermediate biosynthesis; chorismate biosynthesis; chorismate from D-erythrose 4-phosphate and phosphoenolpyruvate: step 4/7. Its function is as follows. Involved in the biosynthesis of the chorismate, which leads to the biosynthesis of aromatic amino acids. Catalyzes the reversible NADPH linked reduction of 3-dehydroshikimate (DHSA) to yield shikimate (SA). The protein is Shikimate dehydrogenase (NADP(+)) of Anaeromyxobacter sp. (strain K).